Consider the following 491-residue polypeptide: (1S)-1-hydroxy-luvungin A synthase CYP88A37 (491 aa).

Residues 5-25 (FSWLILALAIFIGTYAFVFGV) form a helical membrane-spanning segment. Residue cysteine 439 coordinates heme.

Belongs to the cytochrome P450 family. It depends on heme as a cofactor. In terms of tissue distribution, expressed in maturing fruits and in juice vesicles.

Its subcellular location is the membrane. It catalyses the reaction luvungin A + reduced [NADPH--hemoprotein reductase] + O2 = (1S)-1-hydroxy-luvungin A + oxidized [NADPH--hemoprotein reductase] + H2O + H(+). Its pathway is secondary metabolite biosynthesis; terpenoid biosynthesis. In terms of biological role, monooxygenase involved in the biosynthesis of limonoids triterpene natural products such as limonin, a compound with insecticidal activity responsible for the bitter taste in citrus. Catalyzes the conversion of luvungin A to (1S)-1-hydroxy-luvungin A. The protein is (1S)-1-hydroxy-luvungin A synthase CYP88A37 of Citrus sinensis (Sweet orange).